A 101-amino-acid chain; its full sequence is Small ribosomal subunit protein uS14 (101 aa).

Belongs to the universal ribosomal protein uS14 family. In terms of assembly, part of the 30S ribosomal subunit. Contacts proteins S3 and S10.

Functionally, binds 16S rRNA, required for the assembly of 30S particles and may also be responsible for determining the conformation of the 16S rRNA at the A site. This is Small ribosomal subunit protein uS14 from Paracoccus denitrificans (strain Pd 1222).